The following is a 679-amino-acid chain: MSKNLLIELGLEELPAYVVTPSEKQLGERLATFLTENRLSFEDIQTFSTPRRLAVRVSGLAAQQTDLTEDFKGPAKKIALDADGNFSKAAQGFVRGKGLTTDAIEFREVKGEEYVYVTKHEAGKPAKEVLLGVTEVLSAMTFPVSMHWANNSFEYIRPVHTLTVLLDDEALDLDFLDIHSGRVSRGHRFLGKETTITSADSYEDDLRSQFVIADAKERQEMIVEQIKTLEVEQGVQVDIDEDLLNEVLNLVEFPTAFMGSFEAKYLDVPEEVLVTSMKNHQRYFVVRDQEGRLMPNFVSVRNGNDQAIENVIKGNEKVLVARLEDGEFFWREDQKLQIADLVAKLTNVTFHEKIGSLAEHMDRTRVIAASLAKEANLSAEEEAAVDRAAQIYKFDLLTGMVGEFDELQGIMGEKYALLSGEDAAVATAIREHYLPDAAGGALPETKVGAVLALADKLDTLLSFFSVGLIPSGSNDPYALRRATQGIVRILDHFGWRIPMDKLVDSLYDLSFDSLAYTNKADVMNFIRARVDKMMGKAAPKDIREAILASSTFVVPEMLAVAEALVKASHTENYKPAVESLSRAFNLAEKADASVHVDPSLFENEQENTLFAAIQGLTLAGSAAQQLEQVFVLSPVINDFFDNTMVMAEDQALKNNRLAILSDLVSKAKTIAAFNQLNTK.

The protein belongs to the class-II aminoacyl-tRNA synthetase family. In terms of assembly, tetramer of two alpha and two beta subunits.

The protein resides in the cytoplasm. It catalyses the reaction tRNA(Gly) + glycine + ATP = glycyl-tRNA(Gly) + AMP + diphosphate. This Streptococcus pyogenes serotype M6 (strain ATCC BAA-946 / MGAS10394) protein is Glycine--tRNA ligase beta subunit.